The primary structure comprises 367 residues: CST complex subunit STN1 (367 aa).

A DNA-binding region (OB) is located at residues 56–154 (VEILGTVIGR…EIRVTTYYKV (99 aa)). Winged helix-turn-helix (wHTH) stretches follow at residues 190-294 (RAFS…YVTR) and 295-367 (EDKE…YTAF).

It belongs to the STN1 family. In terms of assembly, component of the CST complex, composed of TEN1, CTC1 and STN1. Interacts with TEN1 and CTC1; the interaction is direct. Interacts with ACD/TPP1.

It is found in the nucleus. It localises to the chromosome. Its subcellular location is the telomere. Functionally, component of the CST complex, a complex that binds to single-stranded DNA and is required to protect telomeres from DNA degradation. The CST complex binds single-stranded DNA with high affinity in a sequence-independent manner, while isolated subunits bind DNA with low affinity by themselves. In addition to telomere protection, the CST complex has probably a more general role in DNA metabolism at non-telomeric sites. The polypeptide is CST complex subunit STN1 (Ailuropoda melanoleuca (Giant panda)).